The following is a 685-amino-acid chain: Stromal interaction molecule 1 (685 aa).

The signal sequence occupies residues M1 to S22. The Extracellular segment spans residues L23 to D213. 2 EF-hand domains span residues S64–N97 and T102–S126. Ca(2+) is bound by residues D76, D78, N80, D82, and E87. 2 N-linked (GlcNAc...) asparagine glycosylation sites follow: N131 and N171. In terms of domain architecture, SAM spans W132–F200. A helical membrane pass occupies residues F214–N234. Topologically, residues R235–K685 are cytoplasmic. Positions L248–V442 form a coiled coil. A Phosphoserine modification is found at S257. The tract at residues P344–V442 is SOAR/CAD. A contributes to fast Ca(2+)-dependent inactivation of CRAC channels region spans residues D475–E483. A compositionally biased stretch (low complexity) spans M490–V499. Residues M490–R542 form a disordered region. Phosphothreonine is present on T504. S512 is modified (phosphoserine). A compositionally biased stretch (basic and acidic residues) spans D515–R532. T517 is modified (phosphothreonine). Phosphoserine is present on residues S519, S521, S523, S524, S567, S575, S602, S608, S618, S621, and S628. The interval L596–K685 is disordered. Low complexity predominate over residues S608–S620. The Microtubule tip localization signal motif lies at T642–P645. Acidic residues predominate over residues E655–D666. Residue S660 is modified to Phosphoserine. T665 is modified (phosphothreonine). Residue S668 is modified to Phosphoserine. The segment covering G670–K685 has biased composition (basic residues). The segment at K672–K685 is required for generation of inwardly rectifying CRAC currents.

As to quaternary structure, monomer in the presence of Ca(2+); it oligomerizes in absence of Ca(2+). Forms homooligomers and heterooligomers with STIM2. Interacts with pore-forming subunits of CRAC channels, ORAI1, ORAI2 and ORAI3; this interaction is potentiated upon Ca(2+) store depletion. Interacts (via the transmembrane region and the SOAR/CAD domain) with SPPL3; the interaction promotes the binding of STIM1 to ORAI1. Interacts (via the SOAR/CAD domain) with ORAI1. Interacts with MAPRE1; probably required for targeting to the growing microtubule plus ends. Interacts with CRACR2A/EFCAB4B; the interaction is direct and takes place in absence of Ca(2+). Forms a complex with CRACR2A/EFCAB4B and ORAI1 at low concentration of Ca(2+), the complex dissociates at elevated Ca(2+) concentrations. Interacts with SARAF, promoting a slow inactivation of STIM1-dependent SOCE activity, possibly by facilitating the deoligomerization of STIM1. Interacts with EFHB; the interaction takes place upon Ca(2+)-store depletion and inhibits the association with SARAF. Interacts with ASPH (isoform 8). Interacts with SLC35G1; intracellular Ca(2+)-dependent. May interact with ATP1A1, ATP2A2, ATP2B1, ATP2B4, KPNB1 and XPO1; through SLC35G1. Interacts with TMEM203. Interacts with STIMATE, promoting STIM1 conformational switch. Interacts with TMEM178A. Interacts with CASQ1 (via C-terminal end and preferentially with the monomeric form); this interaction increases in response to a depletion of intracellular Ca(2+), decreases both STIM1 aggregation and clustering, interaction of STIM1 with ORAI1 and store-operated Ca(2+) entry (SOCE) activity. Interacts with ADCY8. Glycosylation is required for cell surface expression. In terms of processing, phosphorylated predominantly on Ser residues. In terms of tissue distribution, ubiquitously expressed in various human primary cells and tumor cell lines.

The protein localises to the cell membrane. Its subcellular location is the endoplasmic reticulum membrane. It localises to the cytoplasm. The protein resides in the cytoskeleton. It is found in the sarcoplasmic reticulum. Functionally, acts as a Ca(2+) sensor that gates two major inward rectifying Ca(2+) channels at the plasma membrane: Ca(2+) release-activated Ca(2+) (CRAC) channels and arachidonate-regulated Ca(2+)-selective (ARC) channels. Plays a role in mediating store-operated Ca(2+) entry (SOCE), a Ca(2+) influx following depletion of intracellular Ca(2+) stores. Upon Ca(2+) depletion, translocates from the endoplasmic reticulum to the plasma membrane where it activates CRAC channel pore-forming subunits ORA1, ORA2 and ORAI3 to generate sustained and oscillatory Ca(2+) entry. Involved in enamel formation. The polypeptide is Stromal interaction molecule 1 (STIM1) (Homo sapiens (Human)).